A 217-amino-acid chain; its full sequence is Cytochrome c biogenesis ATP-binding export protein CcmA (217 aa).

The ABC transporter domain maps to 6–216 (LQLEQLACQR…QYKFFDQGNM (211 aa)). 38 to 45 (GHNGIGKT) is a binding site for ATP.

The protein belongs to the ABC transporter superfamily. CcmA exporter (TC 3.A.1.107) family. In terms of assembly, the complex is composed of two ATP-binding proteins (CcmA) and two transmembrane proteins (CcmB).

It localises to the cell inner membrane. It catalyses the reaction heme b(in) + ATP + H2O = heme b(out) + ADP + phosphate + H(+). In terms of biological role, part of the ABC transporter complex CcmAB involved in the biogenesis of c-type cytochromes; once thought to export heme, this seems not to be the case, but its exact role is uncertain. Responsible for energy coupling to the transport system. The protein is Cytochrome c biogenesis ATP-binding export protein CcmA of Histophilus somni (strain 129Pt) (Haemophilus somnus).